A 131-amino-acid polypeptide reads, in one-letter code: Insulin-like 3 (131 aa).

An N-terminal signal peptide occupies residues 1–26 (MDPHPLTWALVLLGPALALSRAPAPA). Disulfide bonds link Cys34/Cys116, Cys46/Cys129, and Cys115/Cys120. Positions 58-103 (AVAGGDRELLQWLEGQHLFHGLMASGDPMLVLAPQPPPQASGHHHH) are cleaved as a propeptide — c peptide like.

It belongs to the insulin family. In terms of assembly, heterodimer of a B chain and an A chain linked by two disulfide bonds. As to expression, expressed exclusively in prenatal and postnatal Leydig cells.

The protein localises to the secreted. In terms of biological role, seems to play a role in testicular function. May be a trophic hormone with a role in testicular descent in fetal life. Is a ligand for LGR8 receptor. In Sus scrofa (Pig), this protein is Insulin-like 3 (INSL3).